The chain runs to 1357 residues: DNA-directed RNA polymerase subunit beta (1357 aa).

This sequence belongs to the RNA polymerase beta chain family. As to quaternary structure, the RNAP catalytic core consists of 2 alpha, 1 beta, 1 beta' and 1 omega subunit. When a sigma factor is associated with the core the holoenzyme is formed, which can initiate transcription.

It carries out the reaction RNA(n) + a ribonucleoside 5'-triphosphate = RNA(n+1) + diphosphate. In terms of biological role, DNA-dependent RNA polymerase catalyzes the transcription of DNA into RNA using the four ribonucleoside triphosphates as substrates. The protein is DNA-directed RNA polymerase subunit beta of Ectopseudomonas mendocina (strain ymp) (Pseudomonas mendocina).